Consider the following 620-residue polypeptide: Chaperone protein HscA homolog (620 aa).

This sequence belongs to the heat shock protein 70 family.

In terms of biological role, chaperone involved in the maturation of iron-sulfur cluster-containing proteins. Has a low intrinsic ATPase activity which is markedly stimulated by HscB. The polypeptide is Chaperone protein HscA homolog (Shewanella baltica (strain OS155 / ATCC BAA-1091)).